A 181-amino-acid chain; its full sequence is CD160 antigen (181 aa).

A signal peptide spans 1–24 (MLLEPGRGCCALAILLAIVDIQSG). The Ig-like V-type domain occupies 25–133 (GCINITSSAS…QGHFFSILFT (109 aa)). Asn28 carries N-linked (GlcNAc...) asparagine glycosylation. 2 disulfides stabilise this stretch: Cys44/Cys112 and Cys61/Cys68. Asn137 carries N-linked (GlcNAc...) asparagine glycosylation. Ser159 is lipidated: GPI-anchor amidated serine. Positions 160-181 (SGFLQEKVWVMLVTSLVALQAL) are cleaved as a propeptide — removed in mature form.

As to quaternary structure, homomultimer; disulfide-linked. Interacts with HLA-G. Interacts with HLA-A2-B2M in complex with an HIV-derived peptide. Interacts with TNFRSF14 (via cysteine-rich domain 1); this interaction is direct. Interacts with LCK and CD247/CD3 zeta chain. Expression is restricted to functional NK and cytotoxic T lymphocytes. Expressed in viral-specific effector memory and terminally differentiated effector memory CD8+ T cells. Expressed in memory and activated CD4+ T cell subsets (at protein level). Expressed at high levels in intraepithelial lymphocytes (at protein level). Expressed in both alpha-beta and gamma-delta CD8+ T cell subsets (at protein level). Expressed in umbilical vein endothelial cells (at protein level). Expressed in monocytes and at lower levels in B cells. Isoform 3: Expressed exclusively in activated NK cells (at protein level).

The protein localises to the cell membrane. The protein resides in the secreted. Its function is as follows. Receptor on immune cells capable to deliver stimulatory or inhibitory signals that regulate cell activation and differentiation. Exists as a GPI-anchored and as a transmembrane form, each likely initiating distinct signaling pathways via phosphoinositol 3-kinase in activated NK cells and via LCK and CD247/CD3 zeta chain in activated T cells. Receptor for both classical and non-classical MHC class I molecules. In the context of acute viral infection, recognizes HLA-C and triggers NK cell cytotoxic activity, likely playing a role in anti-viral innate immune response. On CD8+ T cells, binds HLA-A2-B2M in complex with a viral peptide and provides a costimulatory signal to activated/memory T cells. Upon persistent antigen stimulation, such as occurs during chronic viral infection, may progressively inhibit TCR signaling in memory CD8+ T cells, contributing to T cell exhaustion. On endothelial cells, recognizes HLA-G and controls angiogenesis in immune privileged sites. Receptor or ligand for TNF superfamily member TNFRSF14, participating in bidirectional cell-cell contact signaling between antigen presenting cells and lymphocytes. Upon ligation of TNFRSF14, provides stimulatory signal to NK cells enhancing IFNG production and anti-tumor immune response. On activated CD4+ T cells, interacts with TNFRSF14 and down-regulates CD28 costimulatory signaling, restricting memory and alloantigen-specific immune response. In the context of bacterial infection, acts as a ligand for TNFRSF14 on epithelial cells, triggering the production of antimicrobial proteins and pro-inflammatory cytokines. The soluble GPI-cleaved form, usually released by activated lymphocytes, might play an immune regulatory role by limiting lymphocyte effector functions. This is CD160 antigen from Homo sapiens (Human).